A 298-amino-acid chain; its full sequence is Myozenin-1 (298 aa).

The disordered stretch occupies residues 1–34; the sequence is MPLSGTPAPNKKRKSSKLIMELTGGGQESSGLNL. At S82 the chain carries Phosphoserine. The segment at 105–173 is disordered; it reads FSYSKGSSGG…TGTGDQAGGE (69 aa). The segment covering 118 to 129 has biased composition (low complexity); sequence GSSSAGQYGSGQ. Positions 136–172 are enriched in gly residues; sequence SGSGSGGAGGPGSQTGRGGDAGTTGVGETGTGDQAGG.

Belongs to the myozenin family. In terms of assembly, interacts with ACTN2, ACTN3, FLNA, FLNB, FLNC, LDB3, PPP3CA and TCAP. Interacts via its C-terminal region with MYOT.

The protein resides in the nucleus. Its subcellular location is the cell projection. The protein localises to the pseudopodium. In terms of biological role, myozenins may serve as intracellular binding proteins involved in linking Z-disk proteins such as alpha-actinin, gamma-filamin, TCAP/telethonin, LDB3/ZASP and localizing calcineurin signaling to the sarcomere. Plays an important role in the modulation of calcineurin signaling. May play a role in myofibrillogenesis. The protein is Myozenin-1 (MYOZ1) of Sus scrofa (Pig).